The chain runs to 118 residues: Putative pterin-4-alpha-carbinolamine dehydratase (118 aa).

The protein belongs to the pterin-4-alpha-carbinolamine dehydratase family.

The enzyme catalyses (4aS,6R)-4a-hydroxy-L-erythro-5,6,7,8-tetrahydrobiopterin = (6R)-L-erythro-6,7-dihydrobiopterin + H2O. The sequence is that of Putative pterin-4-alpha-carbinolamine dehydratase from Xanthomonas oryzae pv. oryzae (strain MAFF 311018).